The chain runs to 200 residues: Blue fluorescence protein (200 aa).

Lumazine-binding repeat units lie at residues 1–111 (MFKG…TGGR) and 112–200 (SLSG…AGNW).

Monomer.

It is found in the cytoplasm. In terms of biological role, blue fluorescence protein (BFP) that can bind 6,7-dimethyl-8-ribityllumazine, riboflavin, and 6-methyl-7-oxo-8-ribityllumazine as a bound fluorophore. Has no riboflavin-synthase activity. The protein is Blue fluorescence protein of Aliivibrio fischeri (Vibrio fischeri).